We begin with the raw amino-acid sequence, 236 residues long: Ribose-5-phosphate isomerase A (236 aa).

Substrate-binding positions include 32-35, 87-90, and 100-103; these read TGST, DGSD, and KGGG. Glu109 acts as the Proton acceptor in catalysis. Lys127 contacts substrate.

This sequence belongs to the ribose 5-phosphate isomerase family. As to quaternary structure, homodimer.

The catalysed reaction is aldehydo-D-ribose 5-phosphate = D-ribulose 5-phosphate. The protein operates within carbohydrate degradation; pentose phosphate pathway; D-ribose 5-phosphate from D-ribulose 5-phosphate (non-oxidative stage): step 1/1. Its function is as follows. Catalyzes the reversible conversion of ribose-5-phosphate to ribulose 5-phosphate. The polypeptide is Ribose-5-phosphate isomerase A (Haloquadratum walsbyi (strain DSM 16790 / HBSQ001)).